Consider the following 549-residue polypeptide: Chaperonin GroEL (549 aa).

ATP contacts are provided by residues 30–33, Lys51, 87–91, Gly415, and Asp496; these read TLGP and DGTTT.

The protein belongs to the chaperonin (HSP60) family. Forms a cylinder of 14 subunits composed of two heptameric rings stacked back-to-back. Interacts with the co-chaperonin GroES.

Its subcellular location is the cytoplasm. It carries out the reaction ATP + H2O + a folded polypeptide = ADP + phosphate + an unfolded polypeptide.. Its function is as follows. Together with its co-chaperonin GroES, plays an essential role in assisting protein folding. The GroEL-GroES system forms a nano-cage that allows encapsulation of the non-native substrate proteins and provides a physical environment optimized to promote and accelerate protein folding. This is Chaperonin GroEL from Prosthecochloris aestuarii (strain DSM 271 / SK 413).